The following is a 338-amino-acid chain: MSVEERPVIFDDQSELPKVFVGGRKSKLALVQTQHVAAMLKKVHPDYSFPVLGLTTLGDQVQSKPLYSFDGKALWTKELETLLLEKVPGFDQQDIIVHSLKDMPTVLPDGCELGAILTREDPRDALVMAAGSPYKTLADLPAGSVVGTSSIRRSAQLKKSYPGLVYESVRGNVGTRLSKLDDPETPYKCLILAAAGLKRLDLGDRITGYLQKPDMLHAVGQGALGLEIRQGDEKTKKILEAIYDKESTLCCLAERAVMRTLEGGCSVPIGVETKYENGKLTLDAIVVSVEGTEFVECTQVRAVEENWEAEQLGKDVAEQLVKDGAKKILDAIHLENIK.

The residue at position 265 (cysteine 265) is an S-(dipyrrolylmethanemethyl)cysteine.

This sequence belongs to the HMBS family. Dipyrromethane is required as a cofactor.

It carries out the reaction 4 porphobilinogen + H2O = hydroxymethylbilane + 4 NH4(+). It participates in porphyrin-containing compound metabolism; protoporphyrin-IX biosynthesis; coproporphyrinogen-III from 5-aminolevulinate: step 2/4. In terms of biological role, tetrapolymerization of the monopyrrole PBG into the hydroxymethylbilane pre-uroporphyrinogen in several discrete steps. This Yarrowia lipolytica (strain CLIB 122 / E 150) (Yeast) protein is Porphobilinogen deaminase (HEM3).